The chain runs to 379 residues: DNA replication and repair protein RecF (379 aa).

Residue 34–41 (GDNGAGKT) coordinates ATP.

The protein belongs to the RecF family.

It localises to the cytoplasm. In terms of biological role, the RecF protein is involved in DNA metabolism; it is required for DNA replication and normal SOS inducibility. RecF binds preferentially to single-stranded, linear DNA. It also seems to bind ATP. This Mesorhizobium japonicum (strain LMG 29417 / CECT 9101 / MAFF 303099) (Mesorhizobium loti (strain MAFF 303099)) protein is DNA replication and repair protein RecF.